The chain runs to 514 residues: Peptide chain release factor 3 (514 aa).

The 261-residue stretch at 8-268 (KKRRTFAIIS…IFLKFAPEPH (261 aa)) folds into the tr-type G domain. GTP contacts are provided by residues 17 to 24 (SHPDAGKT), 85 to 89 (DTPGH), and 139 to 142 (NKLD).

Belongs to the TRAFAC class translation factor GTPase superfamily. Classic translation factor GTPase family. PrfC subfamily.

The protein resides in the cytoplasm. Functionally, increases the formation of ribosomal termination complexes and stimulates activities of RF-1 and RF-2. It binds guanine nucleotides and has strong preference for UGA stop codons. It may interact directly with the ribosome. The stimulation of RF-1 and RF-2 is significantly reduced by GTP and GDP, but not by GMP. The sequence is that of Peptide chain release factor 3 from Streptococcus pneumoniae serotype 2 (strain D39 / NCTC 7466).